The following is a 425-amino-acid chain: Serine--tRNA ligase (425 aa).

233-235 is an L-serine binding site; it reads TAE. 264–266 contributes to the ATP binding site; that stretch reads RRE. Residue Glu-287 participates in L-serine binding. 351-354 is an ATP binding site; that stretch reads EVSS. Residue Ser-386 coordinates L-serine.

The protein belongs to the class-II aminoacyl-tRNA synthetase family. Type-1 seryl-tRNA synthetase subfamily. Homodimer. The tRNA molecule binds across the dimer.

The protein localises to the cytoplasm. It catalyses the reaction tRNA(Ser) + L-serine + ATP = L-seryl-tRNA(Ser) + AMP + diphosphate + H(+). The catalysed reaction is tRNA(Sec) + L-serine + ATP = L-seryl-tRNA(Sec) + AMP + diphosphate + H(+). It functions in the pathway aminoacyl-tRNA biosynthesis; selenocysteinyl-tRNA(Sec) biosynthesis; L-seryl-tRNA(Sec) from L-serine and tRNA(Sec): step 1/1. In terms of biological role, catalyzes the attachment of serine to tRNA(Ser). Is also able to aminoacylate tRNA(Sec) with serine, to form the misacylated tRNA L-seryl-tRNA(Sec), which will be further converted into selenocysteinyl-tRNA(Sec). This chain is Serine--tRNA ligase, found in Thermosipho melanesiensis (strain DSM 12029 / CIP 104789 / BI429).